A 623-amino-acid polypeptide reads, in one-letter code: Frizzled and smoothened-like protein M (623 aa).

The signal sequence occupies residues 1–18 (MKSIFIIIFILYVFQVNS). The Extracellular segment spans residues 19-243 (QTIYPIDPSG…WDQLYNLSNT (225 aa)). The region spanning 25–163 (DPSGKCEQYI…NYSEFNLTNY (139 aa)) is the FZ domain. 2 cysteine pairs are disulfide-bonded: Cys-30–Cys-100 and Cys-42–Cys-93. N-linked (GlcNAc...) asparagine glycosylation is found at Asn-57, Asn-106, Asn-109, Asn-154, Asn-159, Asn-169, Asn-199, and Asn-239. The helical transmembrane segment at 244-264 (LAVLSTFGSLYLLVTFIILNP) threads the bilayer. Residues 265–273 (KVTSFDRMY) lie on the Cytoplasmic side of the membrane. A helical transmembrane segment spans residues 274 to 294 (GFFNGSVFMMSLSGVILFIAG). Topologically, residues 295–317 (GPRALIKDGGARISVFEDPLCSS) are extracellular. The chain crosses the membrane as a helical span at residues 318 to 338 (TGFIFQLFAINAILFWAYMGF). Topologically, residues 339–354 (DLWWRVKYITKPLNIQ) are cytoplasmic. Residues 355–375 (KYYVPIAFTISFIFSVIPLAT) traverse the membrane as a helical segment. Over 376–397 (KNYRMVRGNIHCWVHKAVLQNT) the chain is Extracellular. Residues 398 to 418 (LFFGPLGLTLTISTGFIGLVI) traverse the membrane as a helical segment. At 419–439 (YEIYKIVKATGRGGIMKLEIK) the chain is on the cytoplasmic side. The chain crosses the membrane as a helical span at residues 440 to 460 (PILNIVLIYFSFVYIFAFNFH). The Extracellular segment spans residues 461–494 (NDNNSKNTYGSIDEFFQCTLESDDPSKCTVGGPS). Residue Asn-463 is glycosylated (N-linked (GlcNAc...) asparagine). A helical membrane pass occupies residues 495-515 (IGSLGYFIYCIRIYGIYCFFL). The Cytoplasmic portion of the chain corresponds to 516-623 (QGLNERAFKI…DIEIGSVNIK (108 aa)). The interval 552–590 (PSESGNSSTTAGTSTTINNSNINKKNNNSKPTLSTMDSN) is disordered. Low complexity predominate over residues 555-580 (SGNSSTTAGTSTTINNSNINKKNNNS).

It belongs to the G-protein coupled receptor Fz/Smo family.

The protein localises to the membrane. The protein is Frizzled and smoothened-like protein M (fslM-1) of Dictyostelium discoideum (Social amoeba).